The chain runs to 119 residues: UPF0102 protein Athe_0977 (119 aa).

This sequence belongs to the UPF0102 family.

The chain is UPF0102 protein Athe_0977 from Caldicellulosiruptor bescii (strain ATCC BAA-1888 / DSM 6725 / KCTC 15123 / Z-1320) (Anaerocellum thermophilum).